The sequence spans 367 residues: Viral cathepsin (367 aa).

The signal sequence occupies residues M1 to C25. A propeptide spans D26–L156 (activation peptide). N-linked (GlcNAc...) asparagine; by host glycans are attached at residues N103 and N135. 3 disulfide bridges follow: C177/C218, C211/C251, and C306/C354. C180 is a catalytic residue. Catalysis depends on residues H313 and N333.

Belongs to the peptidase C1 family. In terms of processing, synthesized as an inactive proenzyme and activated by proteolytic removal of the inhibitory propeptide.

It carries out the reaction Endopeptidase of broad specificity, hydrolyzing substrates of both cathepsin L and cathepsin B.. Cysteine protease that plays an essential role in host liquefaction to facilitate horizontal transmission of the virus. May participate in the degradation of foreign protein expressed by the baculovirus system. The protein is Viral cathepsin (VCATH) of Lepidoptera (butterflies and moths).